A 185-amino-acid polypeptide reads, in one-letter code: ATP-dependent protease subunit HslV (185 aa).

Residue Thr12 is part of the active site. Residues Ala168, Cys171, and Thr174 each coordinate Na(+).

This sequence belongs to the peptidase T1B family. HslV subfamily. A double ring-shaped homohexamer of HslV is capped on each side by a ring-shaped HslU homohexamer. The assembly of the HslU/HslV complex is dependent on binding of ATP.

Its subcellular location is the cytoplasm. It catalyses the reaction ATP-dependent cleavage of peptide bonds with broad specificity.. Its activity is regulated as follows. Allosterically activated by HslU binding. Functionally, protease subunit of a proteasome-like degradation complex believed to be a general protein degrading machinery. The polypeptide is ATP-dependent protease subunit HslV (Cereibacter sphaeroides (strain ATCC 17029 / ATH 2.4.9) (Rhodobacter sphaeroides)).